A 481-amino-acid chain; its full sequence is MASAASVTSLADEVNCPICQGTLREPVTIDCGHNFCRACLTRYCEIPGPDLEESPTCPLCKEPFRPGSFRPNWQLANVVENIERLQLVSTLGLGEEDVCQEHGEKIYFFCEDDEMQLCVVCREAGEHATHTMRFLEDAAAPYREQIHKCLKRLRKEREETQEIQSRENKRMQVLLTQVSTKRQQVISEFAHLRKFLEEQQSILLAQLESLDGDILKQRDEFDLLIAGESCRFSALIEELEEKNERPARELLTDIRSTLIRCETRKCRKPVAVSPELGQRIRDFPQQALPLQREMKMFLEKLCFELDYEPAHISLDPQTSHPKLLLSEDHQRAQFSYKWQNSPDNPQRFDRATCVLAHTGITGGRHTWVVSIDLAHGGSCTVGVVSEDVQRKGELRLRPEEGVWAVRLAWGFVSALGSFPTRLTLKEQPWQVRVSLDYEVGWVTFTNAVTREPIYTFTASFTRKVIPFFGLWGRGSSFFLSS.

The RING-type zinc finger occupies 16-61; the sequence is CPICQGTLREPVTIDCGHNFCRACLTRYCEIPGPDLEESPTCPLCK. A B box-type zinc finger spans residues 94–135; it reads GEEDVCQEHGEKIYFFCEDDEMQLCVVCREAGEHATHTMRFL. Residues Cys99, His102, Cys121, and His127 each contribute to the Zn(2+) site. The stretch at 142–177 forms a coiled coil; sequence YREQIHKCLKRLRKEREETQEIQSRENKRMQVLLTQ. The 190-residue stretch at 292 to 481 folds into the B30.2/SPRY domain; that stretch reads REMKMFLEKL…GRGSSFFLSS (190 aa).

It belongs to the TRIM/RBCC family. As to quaternary structure, interacts with IFNAR1; this interaction prevents association of IFNAR1 with TYK2.

Its subcellular location is the cytoplasm. Functionally, E3 ligase that plays an essential role in the differentiation and survival of terminal erythroid cells. May directly bind to PTEN and promote its ubiquitination, resulting in its proteasomal degradation and activation of hypertrophic signaling. In addition, plays a role in immune response regulation by repressing the phosphorylation of STAT1 and STAT2 in the interferon/JAK/STAT signaling pathway independent of its E3 ligase activity. Mechanistically, interacts with the intracellular domain of IFNAR1 and thereby inhibits the association of TYK2 and IFNAR1. The sequence is that of Tripartite motif-containing protein 10 (TRIM10) from Pan troglodytes (Chimpanzee).